A 421-amino-acid chain; its full sequence is MRKIVAMAVICLTAASGLTSAYAAQLADDEAGLRIRLKNELRRADKPSAGAGRDIYAWVQGGLLDFNSGYYSNIIGVEGGAYYVYKLGARADMSTRWYLDGDKSFGFALGAVKIKPSENSLLKLGRFGTDYSYGSLPYRIPLMAGSSQRTLPTVSEGALGYWALTPNIDLWGMWRSRVFLWTDSTTGIRDEGVYNSQTGKYDKHRARSFLAASWHDDTSRYSLGASVQKDVSNQIQSILEKSIPLDPNYTLKGELLGFYAQLEGLSRNTSQPNETALVSGQLTWNAPWGSVFGSGGYLRHAMNGAVVDTDIGYPFSLSLDRNREGMQSWQLGVNYRLTPQFTLTFAPIVTRGYESSKRDVRIEGTGILGGMNYRVSEGPLQGMNFFLAADKGREKRDGSTLGDRLNYWDVKMSIQYDFMLK.

The signal sequence occupies residues 1–23 (MRKIVAMAVICLTAASGLTSAYA).

This sequence belongs to the outer membrane porin (Opr) (TC 1.B.25) family.

The protein localises to the cell outer membrane. Enhances the activity of the UidB (GusB) glucuronide transporter, on its own however it has no transport activity. Glucuronide transport does not occur in strain K12 due to a variant at position 100 of the UidB (GusB, AC P0CE44, AC P0CE45) protein. The protein is Membrane-associated protein UidC (uidC) of Escherichia coli (strain K12).